The chain runs to 315 residues: Prephenate dehydratase (315 aa).

A Prephenate dehydratase domain is found at 3-190 (RIAYLGPQGT…ARTRFVLVGR (188 aa)). Residues 204–281 (SVALRLPNTP…EDVRYLGSWP (78 aa)) enclose the ACT domain.

As to quaternary structure, homodimer.

It catalyses the reaction prephenate + H(+) = 3-phenylpyruvate + CO2 + H2O. Its pathway is amino-acid biosynthesis; L-phenylalanine biosynthesis; phenylpyruvate from prephenate: step 1/1. This Mycobacterium sp. (strain JLS) protein is Prephenate dehydratase (pheA).